The following is a 735-amino-acid chain: Translation initiation factor IF-2, chloroplastic (735 aa).

The tr-type G domain occupies 239–411 (RRAPIVTILG…ILLMADIENY (173 aa)). The segment at 248–255 (GHVDHGKT) is G1. 248–255 (GHVDHGKT) contributes to the GTP binding site. Positions 273–277 (GITQK) are G2. Residues 298–301 (DTPG) are G3. GTP is bound by residues 298-302 (DTPGH) and 352-355 (NKID). The G4 stretch occupies residues 352 to 355 (NKID). A G5 region spans residues 388 to 390 (SAS).

The protein belongs to the TRAFAC class translation factor GTPase superfamily. Classic translation factor GTPase family. IF-2 subfamily.

It is found in the plastid. The protein localises to the chloroplast. Its function is as follows. One of the essential components for the initiation of protein synthesis. Protects formylmethionyl-tRNA from spontaneous hydrolysis and promotes its binding to the 30S ribosomal subunits. Also involved in the hydrolysis of GTP during the formation of the 70S ribosomal complex. This is Translation initiation factor IF-2, chloroplastic (infB) from Guillardia theta (Cryptophyte).